The chain runs to 249 residues: 3-deoxy-D-manno-octulosonic acid kinase (249 aa).

Asp175 is an active-site residue.

It belongs to the protein kinase superfamily. KdkA/RfaP family.

The protein resides in the cell inner membrane. The enzyme catalyses an alpha-Kdo-(2-&gt;6)-lipid IVA + ATP = a 4-O-phospho-alpha-Kdo-(2-&gt;6)-lipid IVA + ADP + H(+). The protein operates within bacterial outer membrane biogenesis; LPS core biosynthesis. In terms of biological role, catalyzes the ATP-dependent phosphorylation of the 3-deoxy-D-manno-octulosonic acid (Kdo) residue in Kdo-lipid IV(A) at the 4-OH position. In Stenotrophomonas maltophilia (strain K279a), this protein is 3-deoxy-D-manno-octulosonic acid kinase.